The following is an 84-amino-acid chain: U4-theraphotoxin-Hhn1ac (84 aa).

The N-terminal stretch at 1-22 is a signal peptide; sequence MKVTLIAILTCAAVLVLHTTAA. A propeptide spanning residues 23–47 is cleaved from the precursor; sequence EELEESQLMEVGMPDTELAAVDEER. Cystine bridges form between C51–C65, C55–C76, and C70–C81.

This sequence belongs to the neurotoxin 12 (Hwtx-2) family. 02 (Hwtx-2) subfamily. Expressed by the venom gland.

The protein resides in the secreted. In terms of biological role, postsynaptic neurotoxin. This chain is U4-theraphotoxin-Hhn1ac, found in Cyriopagopus hainanus (Chinese bird spider).